A 149-amino-acid chain; its full sequence is UPF0178 protein VFMJ11_0615 (149 aa).

Belongs to the UPF0178 family.

This chain is UPF0178 protein VFMJ11_0615, found in Aliivibrio fischeri (strain MJ11) (Vibrio fischeri).